The primary structure comprises 416 residues: Basic salivary proline-rich protein 2 (416 aa).

The signal sequence occupies residues M1 to A16. Q17 carries the pyrrolidone carboxylic acid modification. Positions L19 to S28 are enriched in polar residues. A disordered region spans residues L19 to Q416. Position 24 is a phosphoserine (S24). Residues G34–P47 show a composition bias toward low complexity. Pro residues-rich tracts occupy residues Q48–Q104 and R112–Q165. S52 bears the Phosphoserine mark. Repeat copies occupy residues P53–P72, P74–P93, P94–S113, P114–P133, P135–P154, P155–R174, P176–P195, P197–P216, P217–R236, P238–P257, P259–P278, P279–R298, P300–P319, P321–P340, and P341–R360. The 15 X 20 AA approximate tandem repeats of P-P-G-K-P-Q-G-P-P-P-Q-G-[GD]-[NKS]-[KSQ]-[PRS]-[QRS] [GPS]-[PSAR]-[PSR] stretch occupies residues P53–R360. N168 is a glycosylation site (N-linked (GlcNAc...) asparagine). Pro residues predominate over residues P177–Q227. A glycan (N-linked (GlcNAc...) asparagine) is linked at N230. Residue S232 is glycosylated (O-linked (Hex) serine). Pro residues predominate over residues P239–Q289. Residue N272 is glycosylated (N-linked (GlcNAc...) asparagine). Residues G290–P300 are compositionally biased toward low complexity. Pro residues-rich tracts occupy residues P301 to Q351 and Q378 to Q416.

In terms of processing, N- and O-glycosylated. In head and neck cancer patients, O-glycosylated with glucosylgalactosyl carbohydrate moiety. This modification would require prior hydroxylation on the lysine residue. Proteolytically cleaved at the tripeptide Xaa-Pro-Gln, where Xaa in the P(3) position is mostly lysine. The endoprotease may be of microbial origin. Post-translationally, pyroglutamate formation occurs on terminal Gln residues of cleaved peptides. Pyroglutamate formation found on at least Gln-398 and Gln-400.

It is found in the secreted. The chain is Basic salivary proline-rich protein 2 (PRB2) from Homo sapiens (Human).